A 266-amino-acid chain; its full sequence is Putative carbamate hydrolase RutD (266 aa).

It belongs to the AB hydrolase superfamily. Hydrolase RutD family.

The enzyme catalyses carbamate + 2 H(+) = NH4(+) + CO2. Its function is as follows. Involved in pyrimidine catabolism. May facilitate the hydrolysis of carbamate, a reaction that can also occur spontaneously. This chain is Putative carbamate hydrolase RutD, found in Enterobacter cloacae subsp. cloacae (strain ATCC 13047 / DSM 30054 / NBRC 13535 / NCTC 10005 / WDCM 00083 / NCDC 279-56).